The sequence spans 670 residues: MSLTNLFKLQSSLKPSGDQPQAIQKLVNNFKQGLQEQILLGATGTGKTFTIANIIQHLQQKTLVIAHNKTLAGQLYNELKAMFPNNRVEYFISYYDYYQPEAYVASSDTYIEKDSKINDEIDQLRHSAAGSLLNRDDVIVVASVSCIYGVGDLKDYQKSTLHLQIGDKYERQALINKLIELKYQRNEINFQRGTFRVRGDIIEIIASSSKEIGIRIIFFGNEIENIQNFDVLNGKAITNLKLITLFPASLYATNTQKLQEGIKRIRQELKEQINHFEKTNQLLAAQKIKMRTLHDLEMLEQIGNCNGVENYSRHLALKEKGEAPSTLIDFFGNEFLTIIDESHVTIPQIKGMYFGDFSRKTNLVNFGFRLPSALDNRPLKFHEFQAKMNKVIYLSATPGNYELTKKIPIVEQIIRPTFVLDPEIEIRPTHNQMDDLYFEIKHQTKNNQRILITTLTINMSEDLTAYLKNLCIKVAYLHSEIKSLQRLEILKDLRLGKYDCLVGVNLLREGLDLPEVALVAILDADKQGFLRNERSLIQTIGRAARNITGKAIMYADCISPAMQIAIEETYRRRKIQQQYNETMKVTPTALNKTILETISIKQKESAQNENENGKVKGQKKLQTHTNITAKNKEIKRLQKMMKEAAKTLDFEKAATLRDLILELEKKGKLK.

A Helicase ATP-binding domain is found at 28–414 (NNFKQGLQEQ…KKIPIVEQII (387 aa)). 41–48 (GATGTGKT) is a binding site for ATP. The short motif at 94 to 117 (YYDYYQPEAYVASSDTYIEKDSKI) is the Beta-hairpin element. The 163-residue stretch at 432–594 (QMDDLYFEIK…VTPTALNKTI (163 aa)) folds into the Helicase C-terminal domain. In terms of domain architecture, UVR spans 631-666 (NKEIKRLQKMMKEAAKTLDFEKAATLRDLILELEKK).

The protein belongs to the UvrB family. Forms a heterotetramer with UvrA during the search for lesions. Interacts with UvrC in an incision complex.

Its subcellular location is the cytoplasm. The UvrABC repair system catalyzes the recognition and processing of DNA lesions. A damage recognition complex composed of 2 UvrA and 2 UvrB subunits scans DNA for abnormalities. Upon binding of the UvrA(2)B(2) complex to a putative damaged site, the DNA wraps around one UvrB monomer. DNA wrap is dependent on ATP binding by UvrB and probably causes local melting of the DNA helix, facilitating insertion of UvrB beta-hairpin between the DNA strands. Then UvrB probes one DNA strand for the presence of a lesion. If a lesion is found the UvrA subunits dissociate and the UvrB-DNA preincision complex is formed. This complex is subsequently bound by UvrC and the second UvrB is released. If no lesion is found, the DNA wraps around the other UvrB subunit that will check the other stand for damage. This chain is UvrABC system protein B, found in Onion yellows phytoplasma (strain OY-M).